The chain runs to 418 residues: Voltage-gated ClC-type chloride channel ClcB (418 aa).

10 helical membrane-spanning segments follow: residues 5–25 (LLIA…FRHA), 54–74 (LLTP…WQKF), 146–166 (LWIA…PLAG), 168–188 (LFIA…PVII), 222–242 (ALII…LTLM), 260–280 (LALG…VWGN), 291–311 (APPL…AVLA), 316–336 (GAPG…GMLY), 352–372 (LLLG…APIM), and 380–400 (MTGE…ASVI).

The protein belongs to the chloride channel (TC 2.A.49) family. ClcB subfamily.

The protein resides in the cell inner membrane. Probably acts as an electrical shunt for an outwardly-directed proton pump that is linked to amino acid decarboxylation, as part of the extreme acid resistance (XAR) response. The sequence is that of Voltage-gated ClC-type chloride channel ClcB from Escherichia coli O9:H4 (strain HS).